We begin with the raw amino-acid sequence, 401 residues long: Argininosuccinate synthase (401 aa).

Residues 10–18 (AYSGGVDTS) and alanine 38 each bind ATP. Tyrosine 89 contacts L-citrulline. Glycine 119 provides a ligand contact to ATP. L-aspartate-binding residues include threonine 121, asparagine 125, and aspartate 126. Asparagine 125 provides a ligand contact to L-citrulline. Residues arginine 129, serine 177, serine 186, glutamate 262, and tyrosine 274 each coordinate L-citrulline.

Belongs to the argininosuccinate synthase family. Type 1 subfamily. Homotetramer.

It is found in the cytoplasm. It catalyses the reaction L-citrulline + L-aspartate + ATP = 2-(N(omega)-L-arginino)succinate + AMP + diphosphate + H(+). It functions in the pathway amino-acid biosynthesis; L-arginine biosynthesis; L-arginine from L-ornithine and carbamoyl phosphate: step 2/3. This chain is Argininosuccinate synthase, found in Prochlorococcus marinus (strain MIT 9303).